Here is a 579-residue protein sequence, read N- to C-terminus: Protein inscuteable homolog (579 aa).

The interval 74–89 (SVQRWMEDLKLMTECE) is important for interaction with GPSM2. A PDZ-binding motif is present at residues 576–579 (ESFV).

In terms of assembly, interacts with ALS2CR19/PAR3B and GPSM1/AGS3. Interacts with F2RL2/PAR3. Interacts with GPSM2/LGN (via TPR repeat region). In terms of tissue distribution, expressed in brain, kidney, liver, testis and skin.

The protein localises to the cytoplasm. It localises to the cell cortex. May function as an adapter linking the Par3 complex to the GPSM1/GPSM2 complex. Involved in spindle orientation during mitosis. May regulate cell proliferation and differentiation in the developing nervous system. May play a role in the asymmetric division of fibroblasts and participate in the process of stratification of the squamous epithelium. The polypeptide is Protein inscuteable homolog (Insc) (Mus musculus (Mouse)).